A 288-amino-acid polypeptide reads, in one-letter code: AA9 family lytic polysaccharide monooxygenase A (288 aa).

Positions M1–G22 are cleaved as a signal peptide. Cu(2+) is bound by residues H21 and H104. Disulfide bonds link C74-C191 and C115-C119. N151 is a glycosylation site (N-linked (GlcNAc...) asparagine). 2 residues coordinate O2: H177 and Q186. Residue Y188 coordinates Cu(2+). Residues P236 to A270 form a disordered region. The segment covering A249–A270 has biased composition (low complexity).

This sequence belongs to the polysaccharide monooxygenase AA9 family. Cu(2+) serves as cofactor.

It localises to the secreted. It carries out the reaction [(1-&gt;4)-beta-D-glucosyl]n+m + reduced acceptor + O2 = 4-dehydro-beta-D-glucosyl-[(1-&gt;4)-beta-D-glucosyl]n-1 + [(1-&gt;4)-beta-D-glucosyl]m + acceptor + H2O.. Functionally, lytic polysaccharide monooxygenase (LPMO) that depolymerizes crystalline and amorphous polysaccharides via the oxidation of scissile alpha- or beta-(1-4)-glycosidic bonds, yielding C1 and C4 oxidation products. Catalysis by LPMOs requires the reduction of the active-site copper from Cu(II) to Cu(I) by a reducing agent and H(2)O(2) or O(2) as a cosubstrate. Active on cellulose and on xyloglucan for deconstruction of plant biomass. The chain is AA9 family lytic polysaccharide monooxygenase A from Geotrichum candidum (Oospora lactis).